The primary structure comprises 150 residues: Large ribosomal subunit protein bL9 (150 aa).

The protein belongs to the bacterial ribosomal protein bL9 family.

Its function is as follows. Binds to the 23S rRNA. The sequence is that of Large ribosomal subunit protein bL9 from Corynebacterium kroppenstedtii (strain DSM 44385 / JCM 11950 / CIP 105744 / CCUG 35717).